The sequence spans 461 residues: Tumor necrosis factor receptor superfamily member 1A (461 aa).

An N-terminal signal peptide occupies residues methionine 1–glycine 29. Residues leucine 30 to threonine 210 lie on the Extracellular side of the membrane. TNFR-Cys repeat units lie at residues leucine 43 to arginine 82, glutamate 83 to cysteine 125, glycine 126 to cysteine 166, and asparagine 167 to proline 195. Cystine bridges form between cysteine 44-cysteine 58, cysteine 59-cysteine 72, cysteine 62-cysteine 81, cysteine 84-cysteine 99, cysteine 102-cysteine 117, cysteine 105-cysteine 125, and cysteine 127-cysteine 143. The N-linked (GlcNAc...) asparagine glycan is linked to asparagine 54. A glycan (N-linked (GlcNAc...) asparagine) is linked at asparagine 86. Residues asparagine 145 and asparagine 151 are each glycosylated (N-linked (GlcNAc...) asparagine). Disulfide bonds link cysteine 146-cysteine 158, cysteine 149-cysteine 166, cysteine 168-cysteine 179, cysteine 182-cysteine 194, and cysteine 185-cysteine 190. The chain crosses the membrane as a helical span at residues valine 211–cysteine 233. At arginine 234–arginine 461 the chain is on the cytoplasmic side. Residues leucine 340–alanine 350 form an N-SMase activation domain (NSD) region. The region spanning proline 362–leucine 447 is the Death domain.

In terms of assembly, binding of TNF to the extracellular domain leads to homotrimerization. The aggregated death domains provide a novel molecular interface that interacts specifically with the death domain of TRADD. Various TRADD-interacting proteins such as TRAFS, RIPK1 and possibly FADD, are recruited to the complex by their association with TRADD. This complex activates at least two distinct signaling cascades, apoptosis and NF-kappa-B signaling. Interacts with BAG4, BABAM2, FEM1B, GRB2, SQSTM1 and TRPC4AP. Interacts with DAB2IP. Interacts directly with NOL3 (via CARD domain); inhibits TNF-signaling pathway. Interacts with SH3RF2, TRADD and RIPK1. SH3RF2 facilitates the recruitment of RIPK1 and TRADD to TNFRSF1A in a TNF-alpha-dependent process. Interacts with PGLYRP1; this interaction is important for cell death induction. Interacts (via death domain) with MADD (via death domain).

It is found in the cell membrane. Its subcellular location is the golgi apparatus membrane. Its function is as follows. Receptor for TNFSF2/TNF-alpha and homotrimeric TNFSF1/lymphotoxin-alpha. The adapter molecule FADD recruits caspase-8 to the activated receptor. The resulting death-inducing signaling complex (DISC) performs caspase-8 proteolytic activation which initiates the subsequent cascade of caspases (aspartate-specific cysteine proteases) mediating apoptosis. This is Tumor necrosis factor receptor superfamily member 1A (TNFRSF1A) from Sus scrofa (Pig).